Here is a 113-residue protein sequence, read N- to C-terminus: Protein USP1 (113 aa).

A signal peptide spans 1 to 18 (MKITMLFAALSAASGAFA). Repeat copies occupy residues 32 to 37 (IGAGVG), 40 to 45 (IGAGVG), 46 to 49 (PYGY), 50 to 53 (PYGA), 59 to 65 (LQLLPLR), and 69 to 75 (LQWIPLR). Residues 32–45 (IGAGVGIGIGAGVG) form a 2 X 6 AA repeats region. Residues 46–53 (PYGYPYGA) are 2 X 4 AA approximate tandem repeats. A 2 X 7 AA approximate repeats region spans residues 59-75 (LQLLPLRWLSLQWIPLR).

The protein resides in the secreted. This is Protein USP1 (USP1) from Puccinia graminis (Black stem rust fungus).